The chain runs to 507 residues: Phosphoprotein (507 aa).

An interaction with N0 region spans residues 1–48 (MAEEQARHVKNGLECIRALKAEPIGSLAIEEAMAAWSEISDNPGQERA). Disordered regions lie at residues 41 to 99 (DNPG…PPRN), 134 to 163 (GLDG…TEGY), 201 to 231 (NNFP…IKKG), and 250 to 273 (GATQ…GNVP). Ser86 carries the post-translational modification Phosphoserine. Residues 134–145 (GLDGDSTLSGGD) are compositionally biased toward low complexity. A compositionally biased stretch (acidic residues) spans 146–160 (NESENSDVDIGEPDT). Ser151 carries the post-translational modification Phosphoserine. Positions 260 to 270 (SEPSGPGAPAG) are enriched in low complexity. Residues 304-376 (GDYYDDELFS…LSSIMIAIPG (73 aa)) form a multimerization region. 2 interaction with the L polymerase regions span residues 361–377 (STLE…IPGL) and 396–410 (PIIG…AEVL). Residues 457 to 507 (GPASRSVIRSIIKSSRLEEDRKRYLMTLLDDIKGANDLAKFHQMLMKIIMK) are x domain (XD). The segment at 459–507 (ASRSVIRSIIKSSRLEEDRKRYLMTLLDDIKGANDLAKFHQMLMKIIMK) is interaction with the nucleocapsid (N-RNA).

The protein belongs to the morbillivirus P protein family. As to quaternary structure, homotetramer. Interacts (via multimerization domain and XD domain) with polymerase L; this interaction forms the polymerase L-P complex. Interacts (via N-terminus) with N0 (via Ncore); this interaction allows P to chaperon N0 to avoid N polymerization and non-specific RNA binding before encapsidation. Interacts (via C-terminus) with N-RNA template (via Ntail); this interaction maintains the P/L complex anchored to the nucleocapsid template during the sequential transcription. Interacts (via C-terminus) with protein C this interaction allows C to associate with the ribonucleocapsid. Phosphorylation on serines by host CK2 is necessary for the formation of viral factories.

Functionally, essential cofactor of the RNA polymerase L that plays a central role in the transcription and replication by forming the polymerase complex with RNA polymerase L and recruiting L to the genomic N-RNA template for RNA synthesis. Also plays a central role in the encapsidation of nascent RNA chains by forming the encapsidation complex with the nucleocapsid protein N (N-P complex). Acts as a chaperone for newly synthesized free N protein, so-called N0, allowing encapsidation of nascent RNA chains during replication. The nucleoprotein protein N prevents excessive phosphorylation of P, which leads to down-regulation of viral transcription/ replication. Participates, together with N, in the formation of viral factories (viroplasms), which are large inclusions in the host cytoplasm where replication takes place. The protein is Phosphoprotein (P/V) of Measles virus (strain Edmonston-AIK-C vaccine) (MeV).